Here is a 318-residue protein sequence, read N- to C-terminus: MHRLRAAEHPRPDYVLLHISDTHLIGGDRRLYGAVDADDRLGELLEQLNQSGLRPDAIVFTGDLADKGEPAAYRKLRGLVEPFAAQLGAELVWVMGNHDDRAELRKFLLDEAPSMAPLDRVCMIDGLRIIVLDTSVPGHHHGEIRASQLGWLAEELATPAPDGTILALHHPPIPSVLDMAVTVELRDQAALGRVLRGTDVRAILAGHLHYSTNATFVGIPVSVASATCYTQDLTVAAGGTRGRDGAQGCNLVHVYPDTVVHSVIPLGGGETVGTFVSPGQARRKIAESGIFIEPSRRDSLFKHPPMVLTSSAPRSPVD.

Residues Asp21, His23, and Asp63 each coordinate Fe cation. AMP-binding positions include His23, Asp63, and 97 to 98 (NH). Residues Asp63, Asn97, His169, and His207 each contribute to the Mn(2+) site. His209 serves as a coordination point for Fe cation. His209 is a binding site for AMP. A C-terminal extension region spans residues 278-318 (PGQARRKIAESGIFIEPSRRDSLFKHPPMVLTSSAPRSPVD).

The protein belongs to the cyclic nucleotide phosphodiesterase class-III family. As to quaternary structure, homodimer. Fe(3+) is required as a cofactor. Requires Mn(2+) as cofactor.

The protein localises to the cytoplasm. It is found in the cell membrane. It localises to the secreted. The protein resides in the cell wall. Its subcellular location is the cell envelope. It catalyses the reaction a nucleoside 2',3'-cyclic phosphate + H2O = a nucleoside 3'-phosphate + H(+). The enzyme catalyses 2',3'-cyclophospho-AMP + H2O = 3'-AMP + H(+). The catalysed reaction is 2',3'-cyclophospho-GMP + H2O = 3'-GMP + H(+). It carries out the reaction a nucleoside 3',5'-cyclic phosphate + H2O = a nucleoside 5'-phosphate + H(+). It catalyses the reaction 3',5'-cyclic AMP + H2O = AMP + H(+). The enzyme catalyses 3',5'-cyclic GMP + H2O = GMP + H(+). Cyclic nucleotide phosphodiesterase with a dual-specificity for the second messengers cAMP and cGMP. This chain is cAMP/cGMP dual specificity phosphodiesterase MT0825, found in Mycobacterium tuberculosis (strain CDC 1551 / Oshkosh).